The following is a 174-amino-acid chain: Peptide deformylase (174 aa).

Fe cation-binding residues include Cys94 and His136. Glu137 is an active-site residue. His140 provides a ligand contact to Fe cation.

It belongs to the polypeptide deformylase family. Requires Fe(2+) as cofactor.

The catalysed reaction is N-terminal N-formyl-L-methionyl-[peptide] + H2O = N-terminal L-methionyl-[peptide] + formate. In terms of biological role, removes the formyl group from the N-terminal Met of newly synthesized proteins. Requires at least a dipeptide for an efficient rate of reaction. N-terminal L-methionine is a prerequisite for activity but the enzyme has broad specificity at other positions. This is Peptide deformylase from Maricaulis maris (strain MCS10) (Caulobacter maris).